The primary structure comprises 530 residues: Histone-arginine methyltransferase CARMER (530 aa).

The 310-residue stretch at 141 to 450 folds into the SAM-dependent MTase PRMT-type domain; sequence ASQYFQFYGY…QSYDVTIDLH (310 aa). 6 residues coordinate S-adenosyl-L-methionine: Q154, R163, G187, E209, E238, and T266. Asymmetric dimethylarginine; by autocatalysis is present on R501.

Belongs to the class I-like SAM-binding methyltransferase superfamily. Protein arginine N-methyltransferase family. In terms of assembly, homodimer. Post-translationally, the dimethylated protein is the major form.

Its subcellular location is the cytoplasm. It is found in the nucleus. It catalyses the reaction L-arginyl-[protein] + 2 S-adenosyl-L-methionine = N(omega),N(omega)-dimethyl-L-arginyl-[protein] + 2 S-adenosyl-L-homocysteine + 2 H(+). Its function is as follows. Methylates (mono- and asymmetric dimethylation) the guanidino nitrogens of arginyl residues in proteins. May methylate histone H3 at 'Arg-17' and activate transcription via chromatin remodeling. This chain is Histone-arginine methyltransferase CARMER (Art4), found in Drosophila yakuba (Fruit fly).